The primary structure comprises 22 residues: thr operon leader peptide (22 aa).

Positions 1 to 22 (MRNISLTTTIITTTDTTGNGAG) are disordered. A compositionally biased stretch (low complexity) spans 7-22 (TTTIITTTDTTGNGAG).

Belongs to the thr operon leader peptide family.

In terms of biological role, this protein is involved in control of the biosynthesis of threonine. The protein is thr operon leader peptide of Serratia marcescens.